A 117-amino-acid chain; its full sequence is Large ribosomal subunit protein bL19 (117 aa).

Belongs to the bacterial ribosomal protein bL19 family.

Functionally, this protein is located at the 30S-50S ribosomal subunit interface and may play a role in the structure and function of the aminoacyl-tRNA binding site. The chain is Large ribosomal subunit protein bL19 from Methylibium petroleiphilum (strain ATCC BAA-1232 / LMG 22953 / PM1).